The primary structure comprises 640 residues: Chaperone protein DnaK (640 aa).

The residue at position 196 (Thr-196) is a Phosphothreonine; by autocatalysis. Disordered regions lie at residues 487-526 (GKEQ…KEEI) and 593-640 (SHLY…GNDK). Positions 501-526 (TDAEISKMKEDAKEHAAEDQKRKEEI) are enriched in basic and acidic residues. Over residues 595-613 (LYQSQGPESSQPETAAQSD) the composition is skewed to polar residues. Positions 630–640 (AEYEVIDGNDK) are enriched in acidic residues.

This sequence belongs to the heat shock protein 70 family.

Functionally, acts as a chaperone. This chain is Chaperone protein DnaK, found in Pelodictyon phaeoclathratiforme (strain DSM 5477 / BU-1).